Consider the following 385-residue polypeptide: Succinate--CoA ligase [ADP-forming] subunit beta (385 aa).

The region spanning 9–244 (KEVLRKYGVS…LDEEDPKEIE (236 aa)) is the ATP-grasp domain. ATP-binding positions include lysine 46, 53 to 55 (GRG), glutamate 99, cysteine 102, and glutamate 107. Mg(2+) contacts are provided by asparagine 199 and aspartate 213. Residues asparagine 264 and 321–323 (GIM) each bind substrate.

It belongs to the succinate/malate CoA ligase beta subunit family. As to quaternary structure, heterotetramer of two alpha and two beta subunits. Mg(2+) is required as a cofactor.

The catalysed reaction is succinate + ATP + CoA = succinyl-CoA + ADP + phosphate. It catalyses the reaction GTP + succinate + CoA = succinyl-CoA + GDP + phosphate. It functions in the pathway carbohydrate metabolism; tricarboxylic acid cycle; succinate from succinyl-CoA (ligase route): step 1/1. Its function is as follows. Succinyl-CoA synthetase functions in the citric acid cycle (TCA), coupling the hydrolysis of succinyl-CoA to the synthesis of either ATP or GTP and thus represents the only step of substrate-level phosphorylation in the TCA. The beta subunit provides nucleotide specificity of the enzyme and binds the substrate succinate, while the binding sites for coenzyme A and phosphate are found in the alpha subunit. The sequence is that of Succinate--CoA ligase [ADP-forming] subunit beta from Bacillus velezensis (strain DSM 23117 / BGSC 10A6 / LMG 26770 / FZB42) (Bacillus amyloliquefaciens subsp. plantarum).